We begin with the raw amino-acid sequence, 258 residues long: Venom plasminogen activator (258 aa).

Residues 1–18 (MVLIRVLANLLILQLSYA) form the signal peptide. Positions 19-24 (QKSSEL) are excised as a propeptide. In terms of domain architecture, Peptidase S1 spans 25–249 (VVGGDECNIN…YTDWIQSIIS (225 aa)). Disulfide bonds link Cys-31-Cys-163, Cys-50-Cys-66, Cys-98-Cys-256, Cys-142-Cys-210, Cys-174-Cys-189, and Cys-200-Cys-225. An N-linked (GlcNAc...) asparagine glycan is attached at Asn-44. Active-site charge relay system residues include His-65 and Asp-110. Ser-204 acts as the Charge relay system in catalysis.

This sequence belongs to the peptidase S1 family. Snake venom subfamily. As to quaternary structure, monomer. In terms of tissue distribution, expressed by the venom gland.

The protein localises to the secreted. Its function is as follows. Snake venom serine protease that activates plasminogen. Shows a preferential cleavage at Arg-|-Xaa instead of Lys-|-Xaa bonds. This Agkistrodon piscivorus leucostoma (Western cottonmouth) protein is Venom plasminogen activator.